A 480-amino-acid polypeptide reads, in one-letter code: Uridine 5'-monophosphate synthase (480 aa).

N-acetylalanine is present on alanine 2. The OPRTase stretch occupies residues 2–214; it reads AAADALLGSL…AFVAANPNDS (213 aa). Tyrosine 37 carries the post-translational modification Phosphotyrosine. Serine 214 is subject to Phosphoserine. Positions 215–220 are domain linker; that stretch reads LPSVKK. The tract at residues 221–480 is OMPdecase; that stretch reads EPKELSFGAR…WEAYLSRLAV (260 aa). Serine 257 is an orotidine 5'-phosphate binding site. UMP is bound by residues serine 257, aspartate 259, and 281–283; that span reads KIH. Residues lysine 281, lysine 314, aspartate 317, threonine 321, serine 372, 430–432, and 450–451 contribute to the orotidine 5'-phosphate site; these read QQY and GR. Residues lysine 314 and aspartate 317 each act as for OMPdecase activity in the active site. UMP is bound by residues aspartate 317, threonine 321, serine 372, 430–432, and 450–451; these read QQY and GR.

In the N-terminal section; belongs to the purine/pyrimidine phosphoribosyltransferase family. It in the C-terminal section; belongs to the OMP decarboxylase family. In terms of assembly, homodimer; dimerization is required for enzymatic activity.

The catalysed reaction is orotidine 5'-phosphate + diphosphate = orotate + 5-phospho-alpha-D-ribose 1-diphosphate. It carries out the reaction orotidine 5'-phosphate + H(+) = UMP + CO2. It participates in pyrimidine metabolism; UMP biosynthesis via de novo pathway; UMP from orotate: step 1/2. Its pathway is pyrimidine metabolism; UMP biosynthesis via de novo pathway; UMP from orotate: step 2/2. In terms of biological role, bifunctional enzyme catalyzing the last two steps of de novo pyrimidine biosynthesis, orotate phosphoribosyltransferase (OPRT), which converts orotate to orotidine-5'-monophosphate (OMP), and orotidine-5'-monophosphate decarboxylase (ODC), the terminal enzymatic reaction that decarboxylates OMP to uridine monophosphate (UMP). The sequence is that of Uridine 5'-monophosphate synthase (UMPS) from Bos taurus (Bovine).